The sequence spans 330 residues: Ketol-acid reductoisomerase (NADP(+)) (330 aa).

In terms of domain architecture, KARI N-terminal Rossmann spans 2-182 (IHVYYDKDAN…GCTKAGVIET (181 aa)). NADP(+)-binding positions include 25–28 (YGSQ), arginine 48, serine 51, serine 53, and 83–86 (DEVQ). Residue histidine 108 is part of the active site. Glycine 134 lines the NADP(+) pocket. The KARI C-terminal knotted domain maps to 183–328 (TFKEETETDL…KKLRDMMPWI (146 aa)). Mg(2+)-binding residues include aspartate 191, glutamate 195, glutamate 227, and glutamate 231. Residue serine 252 coordinates substrate.

It belongs to the ketol-acid reductoisomerase family. Mg(2+) is required as a cofactor.

The catalysed reaction is (2R)-2,3-dihydroxy-3-methylbutanoate + NADP(+) = (2S)-2-acetolactate + NADPH + H(+). It carries out the reaction (2R,3R)-2,3-dihydroxy-3-methylpentanoate + NADP(+) = (S)-2-ethyl-2-hydroxy-3-oxobutanoate + NADPH + H(+). The protein operates within amino-acid biosynthesis; L-isoleucine biosynthesis; L-isoleucine from 2-oxobutanoate: step 2/4. Its pathway is amino-acid biosynthesis; L-valine biosynthesis; L-valine from pyruvate: step 2/4. Functionally, involved in the biosynthesis of branched-chain amino acids (BCAA). Catalyzes an alkyl-migration followed by a ketol-acid reduction of (S)-2-acetolactate (S2AL) to yield (R)-2,3-dihydroxy-isovalerate. In the isomerase reaction, S2AL is rearranged via a Mg-dependent methyl migration to produce 3-hydroxy-3-methyl-2-ketobutyrate (HMKB). In the reductase reaction, this 2-ketoacid undergoes a metal-dependent reduction by NADPH to yield (R)-2,3-dihydroxy-isovalerate. The sequence is that of Ketol-acid reductoisomerase (NADP(+)) from Halothermothrix orenii (strain H 168 / OCM 544 / DSM 9562).